The sequence spans 180 residues: Virion protein US10 homolog (180 aa).

It belongs to the herpesviridae US10 family. Post-translationally, phosphorylated.

The protein localises to the virion tegument. It localises to the host nucleus matrix. The sequence is that of Virion protein US10 homolog (64) from Varicella-zoster virus (strain Dumas) (HHV-3).